Reading from the N-terminus, the 158-residue chain is Transcription factor HY5 (158 aa).

Positions 1 to 25 are enriched in low complexity; the sequence is MQEQATSSIAASSLPSSSERSSSSA. The segment at 1-105 is disordered; the sequence is MQEQATSSIA…NRVSAQQARE (105 aa). A compositionally biased stretch (basic and acidic residues) spans 26–44; the sequence is LHHELKEGMESDDEIRRVP. Positions 35–46 are interaction with COP1; it reads ESDDEIRRVPEM. Residues 47–58 show a composition bias toward low complexity; it reads GGEATGTTSASG. Residues 86-149 form the bZIP domain; sequence ENKRLKRLLR…QMLRHILKNT (64 aa). The segment at 88–108 is basic motif; that stretch reads KRLKRLLRNRVSAQQARERKK. The segment at 114–142 is leucine-zipper; sequence LEARVKELETKNAELEERLSTLQNENQML.

This sequence belongs to the bZIP family. As to quaternary structure, interacts with COP1. Post-translationally, ubiquitinated by COP1. Ubiquitination takes place in darkness and leads to its subsequent degradation, thereby preventing to activate photomorphogenesis signals.

Its subcellular location is the nucleus. Its function is as follows. Transcription factor that promotes photomorphogenesis in the light and positively regulates fruit pigmentation and fruit nutritional quality. Probably acts downstream of the light receptor network and directly affects transcription of light-induced genes. This chain is Transcription factor HY5 (HY5), found in Solanum lycopersicum (Tomato).